Reading from the N-terminus, the 550-residue chain is Glucagon-like peptide 2 receptor (550 aa).

Over Met-1–Ala-173 the chain is Extracellular. 3 disulfide bridges follow: Cys-83–Cys-105, Cys-96–Cys-137, and Cys-118–Cys-159. N-linked (GlcNAc...) asparagine glycosylation is found at Asn-97, Asn-113, Asn-148, and Asn-162. Residues Leu-174–Thr-198 traverse the membrane as a helical segment. The Cytoplasmic segment spans residues Leu-199 to Arg-210. Residues Asn-211 to Ser-235 traverse the membrane as a helical segment. Over His-236 to Arg-261 the chain is Extracellular. Residues Ser-262–Leu-285 traverse the membrane as a helical segment. The Cytoplasmic segment spans residues His-286–Leu-299. A helical membrane pass occupies residues Trp-300–Ala-321. The Extracellular portion of the chain corresponds to Arg-322–Ile-339. The chain crosses the membrane as a helical span at residues Trp-340–Leu-362. The Cytoplasmic portion of the chain corresponds to Lys-363–Ser-386. The helical transmembrane segment at Thr-387 to Pro-405 threads the bilayer. The Extracellular portion of the chain corresponds to Asp-406–Arg-417. The chain crosses the membrane as a helical span at residues Leu-418–Phe-438. Residues Ala-439–Ile-550 are Cytoplasmic-facing.

The protein belongs to the G-protein coupled receptor 2 family.

It localises to the cell membrane. Functionally, this is a receptor for glucagon-like peptide 2. The activity of this receptor is mediated by G proteins which activate adenylyl cyclase. This chain is Glucagon-like peptide 2 receptor (Glp2r), found in Rattus norvegicus (Rat).